A 192-amino-acid polypeptide reads, in one-letter code: Ion-translocating oxidoreductase complex subunit A (192 aa).

6 helical membrane-spanning segments follow: residues 5–25, 39–59, 72–92, 102–122, 134–154, and 171–191; these read LLLLIGTVLVNNFVLVKFLGL, IGMSMATTFVLTLASVLSFLV, LRTMSFILVIAVVVQFTEMLV, ALGIYLPLITTNCAVLGVALL, AIYGFGAAVGFSLVLILFSAM, and AIAMITAGLMSLAFMGFTGLV.

This sequence belongs to the NqrDE/RnfAE family. In terms of assembly, the complex is composed of six subunits: RnfA, RnfB, RnfC, RnfD, RnfE and RnfG.

The protein resides in the cell inner membrane. In terms of biological role, part of a membrane-bound complex that couples electron transfer with translocation of ions across the membrane. In Shewanella amazonensis (strain ATCC BAA-1098 / SB2B), this protein is Ion-translocating oxidoreductase complex subunit A.